The chain runs to 364 residues: Dihydroorotate dehydrogenase (quinone) (364 aa).

FMN is bound by residues 61–65 and T85; that span reads AGFDK. K65 provides a ligand contact to substrate. 110–114 is a substrate binding site; sequence NRMGF. FMN-binding residues include N139 and N170. N170 provides a ligand contact to substrate. The active-site Nucleophile is the S173. N175 contacts substrate. FMN contacts are provided by K214 and A242. A substrate-binding site is contributed by 243–244; the sequence is NT. FMN-binding positions include G266, G295, and 316 to 317; that span reads YS.

It belongs to the dihydroorotate dehydrogenase family. Type 2 subfamily. In terms of assembly, monomer. It depends on FMN as a cofactor.

The protein resides in the cell membrane. The enzyme catalyses (S)-dihydroorotate + a quinone = orotate + a quinol. The protein operates within pyrimidine metabolism; UMP biosynthesis via de novo pathway; orotate from (S)-dihydroorotate (quinone route): step 1/1. In terms of biological role, catalyzes the conversion of dihydroorotate to orotate with quinone as electron acceptor. The sequence is that of Dihydroorotate dehydrogenase (quinone) from Rhodopseudomonas palustris (strain TIE-1).